Reading from the N-terminus, the 277-residue chain is Large ribosomal subunit protein uL2 (277 aa).

Disordered regions lie at residues 34 to 55 (LQPLPKKAGRNNQGKLTVRHHG) and 213 to 277 (WKGI…RKKK).

It belongs to the universal ribosomal protein uL2 family. Part of the 50S ribosomal subunit. Forms a bridge to the 30S subunit in the 70S ribosome.

In terms of biological role, one of the primary rRNA binding proteins. Required for association of the 30S and 50S subunits to form the 70S ribosome, for tRNA binding and peptide bond formation. It has been suggested to have peptidyltransferase activity; this is somewhat controversial. Makes several contacts with the 16S rRNA in the 70S ribosome. In Staphylococcus haemolyticus (strain JCSC1435), this protein is Large ribosomal subunit protein uL2.